Consider the following 197-residue polypeptide: Inner membrane-spanning protein YciB (197 aa).

5 helical membrane-spanning segments follow: residues 36–56 (IYSATAMLIISSLVVYGALFL), 64–84 (GQWLTLIACLVFGGLTLTFHS), 90–110 (WKAPVVNWLFALGFAGSHFIG), 135–155 (LAWIAFFLFCGAANLFVAFTF), and 162–182 (FKVFGSLGMTVIFLVAQGVYL).

The protein belongs to the YciB family.

The protein localises to the cell inner membrane. In terms of biological role, plays a role in cell envelope biogenesis, maintenance of cell envelope integrity and membrane homeostasis. The protein is Inner membrane-spanning protein YciB of Pseudomonas putida (strain GB-1).